A 288-amino-acid polypeptide reads, in one-letter code: Proteasome subunit beta (288 aa).

A propeptide spans 1–57 (MTAGDPMRLHPGHALSSFTEHLRALAPELLGPNRFAALDGATGSSGGTGAKDIAPHG) (removed in mature form; by autocatalysis). The active-site Nucleophile is Thr-58.

Belongs to the peptidase T1B family. The 20S proteasome core is composed of 14 alpha and 14 beta subunits that assemble into four stacked heptameric rings, resulting in a barrel-shaped structure. The two inner rings, each composed of seven catalytic beta subunits, are sandwiched by two outer rings, each composed of seven alpha subunits. The catalytic chamber with the active sites is on the inside of the barrel. Has a gated structure, the ends of the cylinder being occluded by the N-termini of the alpha-subunits. Is capped by the proteasome-associated ATPase, ARC.

Its subcellular location is the cytoplasm. It carries out the reaction Cleavage of peptide bonds with very broad specificity.. It functions in the pathway protein degradation; proteasomal Pup-dependent pathway. The formation of the proteasomal ATPase ARC-20S proteasome complex, likely via the docking of the C-termini of ARC into the intersubunit pockets in the alpha-rings, may trigger opening of the gate for substrate entry. Interconversion between the open-gate and close-gate conformations leads to a dynamic regulation of the 20S proteasome proteolysis activity. In terms of biological role, component of the proteasome core, a large protease complex with broad specificity involved in protein degradation. The polypeptide is Proteasome subunit beta (Nocardia farcinica (strain IFM 10152)).